A 193-amino-acid polypeptide reads, in one-letter code: Ion-translocating oxidoreductase complex subunit A (193 aa).

The next 6 membrane-spanning stretches (helical) occupy residues 5 to 25, 39 to 59, 63 to 83, 102 to 122, 134 to 154, and 171 to 191; these read LLLFVGTVLVNNFVLVKFLGL, MGMGLATTFVMTLTSICAWLI, ILIPLNLIYLRTLAFILVIAV, LLGIFLPLITTNCAVLGVALL, ALYGFSAAVGFSLVMVLFAAI, and AIALITAGLMSLAFMGFSGLV.

It belongs to the NqrDE/RnfAE family. As to quaternary structure, the complex is composed of six subunits: RsxA, RsxB, RsxC, RsxD, RsxE and RsxG.

Its subcellular location is the cell inner membrane. Functionally, part of a membrane-bound complex that couples electron transfer with translocation of ions across the membrane. Required to maintain the reduced state of SoxR. This is Ion-translocating oxidoreductase complex subunit A from Shigella flexneri serotype 5b (strain 8401).